We begin with the raw amino-acid sequence, 229 residues long: Peptidase E (229 aa).

Catalysis depends on charge relay system residues S120, D135, and H157.

It belongs to the peptidase S51 family.

It is found in the cytoplasm. It carries out the reaction Dipeptidase E catalyzes the hydrolysis of dipeptides Asp-|-Xaa. It does not act on peptides with N-terminal Glu, Asn or Gln, nor does it cleave isoaspartyl peptides.. Hydrolyzes dipeptides containing N-terminal aspartate residues. May play a role in allowing the cell to use peptide aspartate to spare carbon otherwise required for the synthesis of the aspartate family of amino acids. This is Peptidase E from Salmonella newport (strain SL254).